A 328-amino-acid chain; its full sequence is GMP reductase (328 aa).

The active-site Thioimidate intermediate is cysteine 176. Residue 205–228 participates in NADP(+) binding; that stretch reads IIADGGIRTHGDIAKSIRFGASMI.

This sequence belongs to the IMPDH/GMPR family. GuaC type 2 subfamily.

It catalyses the reaction IMP + NH4(+) + NADP(+) = GMP + NADPH + 2 H(+). In terms of biological role, catalyzes the irreversible NADPH-dependent deamination of GMP to IMP. It functions in the conversion of nucleobase, nucleoside and nucleotide derivatives of G to A nucleotides, and in maintaining the intracellular balance of A and G nucleotides. This is GMP reductase from Streptococcus pneumoniae (strain CGSP14).